The sequence spans 691 residues: Threonine--tRNA ligase (691 aa).

Residues 1–22 (MSVPAQPAPGADGGDPRQPIRV) are disordered. The 73-residue stretch at 1 to 73 (MSVPAQPAPG…DADAEVTPIA (73 aa)) folds into the TGS domain. Residues 268–574 (DHRKLGVELD…LTEHYAGAFP (307 aa)) form a catalytic region. 3 residues coordinate Zn(2+): C373, H424, and H551.

It belongs to the class-II aminoacyl-tRNA synthetase family. As to quaternary structure, homodimer. It depends on Zn(2+) as a cofactor.

It localises to the cytoplasm. The enzyme catalyses tRNA(Thr) + L-threonine + ATP = L-threonyl-tRNA(Thr) + AMP + diphosphate + H(+). Its function is as follows. Catalyzes the attachment of threonine to tRNA(Thr) in a two-step reaction: L-threonine is first activated by ATP to form Thr-AMP and then transferred to the acceptor end of tRNA(Thr). Also edits incorrectly charged L-seryl-tRNA(Thr). The sequence is that of Threonine--tRNA ligase from Mycobacterium marinum (strain ATCC BAA-535 / M).